Consider the following 315-residue polypeptide: Porphobilinogen deaminase (315 aa).

An S-(dipyrrolylmethanemethyl)cysteine modification is found at cysteine 245.

It belongs to the HMBS family. In terms of assembly, monomer. The cofactor is dipyrromethane.

It carries out the reaction 4 porphobilinogen + H2O = hydroxymethylbilane + 4 NH4(+). The protein operates within porphyrin-containing compound metabolism; protoporphyrin-IX biosynthesis; coproporphyrinogen-III from 5-aminolevulinate: step 2/4. It functions in the pathway porphyrin-containing compound metabolism; chlorophyll biosynthesis. Its function is as follows. Tetrapolymerization of the monopyrrole PBG into the hydroxymethylbilane pre-uroporphyrinogen in several discrete steps. This is Porphobilinogen deaminase from Prochlorococcus marinus (strain NATL2A).